A 401-amino-acid polypeptide reads, in one-letter code: Large ribosomal subunit protein uL4 (401 aa).

The protein belongs to the universal ribosomal protein uL4 family.

This is Large ribosomal subunit protein uL4 (RpL4) from Drosophila melanogaster (Fruit fly).